Here is a 369-residue protein sequence, read N- to C-terminus: Guanine nucleotide-binding protein subunit beta-2 (369 aa).

The segment covering 1–24 has biased composition (polar residues); it reads MSTIAGESSSSSKMPENSQPTTTE. Residues 1-28 are disordered; that stretch reads MSTIAGESSSSSKMPENSQPTTTEKGSE. WD repeat units follow at residues 79 to 109, 121 to 151, 167 to 197, 209 to 241, 253 to 283, 297 to 327, and 339 to 369; these read GHVG…IVWD, MPTT…SVVP, THTS…AIWD, GHTG…LVWD, GHEA…RLFD, SILF…GVWD, and GHEN…RIWA.

The protein belongs to the WD repeat G protein beta family. In terms of assembly, g proteins are composed of 3 units, alpha, beta and gamma. Interacts with G protein gamma subunits gpc-1 and gpc-2 and with egl-10 and eat-16.

Guanine nucleotide-binding proteins (G proteins) are involved as a modulator or transducer in various transmembrane signaling systems. The beta and gamma chains are required for the GTPase activity, for replacement of GDP by GTP, and for G protein-effector interaction. Plays a role in regulating dopamine-mediated locomotion behavior. In Caenorhabditis elegans, this protein is Guanine nucleotide-binding protein subunit beta-2.